We begin with the raw amino-acid sequence, 500 residues long: Probable cytosol aminopeptidase (500 aa).

The Mn(2+) site is built by Lys-274 and Asp-279. Lys-286 is a catalytic residue. Mn(2+)-binding residues include Asp-297, Asp-356, and Glu-358. Residue Arg-360 is part of the active site.

The protein belongs to the peptidase M17 family. Requires Mn(2+) as cofactor.

It localises to the cytoplasm. The catalysed reaction is Release of an N-terminal amino acid, Xaa-|-Yaa-, in which Xaa is preferably Leu, but may be other amino acids including Pro although not Arg or Lys, and Yaa may be Pro. Amino acid amides and methyl esters are also readily hydrolyzed, but rates on arylamides are exceedingly low.. It carries out the reaction Release of an N-terminal amino acid, preferentially leucine, but not glutamic or aspartic acids.. Presumably involved in the processing and regular turnover of intracellular proteins. Catalyzes the removal of unsubstituted N-terminal amino acids from various peptides. The protein is Probable cytosol aminopeptidase of Saccharophagus degradans (strain 2-40 / ATCC 43961 / DSM 17024).